A 409-amino-acid polypeptide reads, in one-letter code: Arginine deiminase (409 aa).

Residue cysteine 399 is the Amidino-cysteine intermediate of the active site.

This sequence belongs to the arginine deiminase family.

Its subcellular location is the cytoplasm. It catalyses the reaction L-arginine + H2O = L-citrulline + NH4(+). Its pathway is amino-acid degradation; L-arginine degradation via ADI pathway; carbamoyl phosphate from L-arginine: step 1/2. This Borrelia recurrentis (strain A1) protein is Arginine deiminase.